The following is a 221-amino-acid chain: Iron-sulfur cluster repair protein YtfE (221 aa).

This sequence belongs to the RIC family. YtfE subfamily. In terms of assembly, homodimer.

It localises to the cytoplasm. Di-iron-containing protein involved in the repair of iron-sulfur clusters damaged by oxidative and nitrosative stress conditions. This is Iron-sulfur cluster repair protein YtfE from Dickeya chrysanthemi (strain Ech1591) (Dickeya zeae (strain Ech1591)).